Reading from the N-terminus, the 380-residue chain is Cytochrome b (380 aa).

4 consecutive transmembrane segments (helical) span residues 33–53 (FGSL…FLAM), 77–98 (WLIR…YLHI), 113–133 (WNVG…GYVL), and 178–198 (FFAF…LHLL). The heme b site is built by His83 and His97. Heme b is bound by residues His182 and His196. His201 provides a ligand contact to a ubiquinone. The next 4 helical transmembrane spans lie at 226-246 (YKDL…ALFS), 288-308 (LGGV…PFLH), 320-340 (ASQF…WIGG), and 347-367 (FIII…VLFP).

The protein belongs to the cytochrome b family. The cytochrome bc1 complex contains 3 respiratory subunits (MT-CYB, CYC1 and UQCRFS1), 2 core proteins (UQCRC1 and UQCRC2) and probably 6 low-molecular weight proteins. Requires heme b as cofactor.

It localises to the mitochondrion inner membrane. Component of the ubiquinol-cytochrome c reductase complex (complex III or cytochrome b-c1 complex) that is part of the mitochondrial respiratory chain. The b-c1 complex mediates electron transfer from ubiquinol to cytochrome c. Contributes to the generation of a proton gradient across the mitochondrial membrane that is then used for ATP synthesis. This is Cytochrome b (mt-cyb) from Scomber scombrus (Atlantic mackerel).